The chain runs to 121 residues: MARIAGIDIPREKRVEIALTYVYGIGLTRSKLILANAGVNPDIRVKDLSDSDVQKLRGATEEFTLEGDLRRKEGMALKRLQDIGCVRGRRHRMSLPVRGQRTRTNARTRRGSRKTVAGRKK.

The interval 91 to 121 (HRMSLPVRGQRTRTNARTRRGSRKTVAGRKK) is disordered. The span at 100–121 (QRTRTNARTRRGSRKTVAGRKK) shows a compositional bias: basic residues.

It belongs to the universal ribosomal protein uS13 family. In terms of assembly, part of the 30S ribosomal subunit. Forms a loose heterodimer with protein S19. Forms two bridges to the 50S subunit in the 70S ribosome.

Located at the top of the head of the 30S subunit, it contacts several helices of the 16S rRNA. In the 70S ribosome it contacts the 23S rRNA (bridge B1a) and protein L5 of the 50S subunit (bridge B1b), connecting the 2 subunits; these bridges are implicated in subunit movement. Contacts the tRNAs in the A and P-sites. The polypeptide is Small ribosomal subunit protein uS13 (Prochlorococcus marinus (strain MIT 9312)).